Here is a 308-residue protein sequence, read N- to C-terminus: Cilia- and flagella-associated protein 73 (308 aa).

2 coiled-coil regions span residues 34–143 (RLLE…LEPC) and 175–233 (AALR…WESK).

It belongs to the CFAP73 family.

The protein localises to the cytoplasm. Its subcellular location is the cytoskeleton. It is found in the cilium axoneme. Functionally, may play a role in ciliary/flagellar motility by regulating the assembly and the activity of axonemal inner dynein arm. The protein is Cilia- and flagella-associated protein 73 of Homo sapiens (Human).